Reading from the N-terminus, the 305-residue chain is Tyrosine recombinase XerC (305 aa).

One can recognise a Core-binding (CB) domain in the interval 4–95 (TSIQELIDKW…AVKNFYRFLE (92 aa)). A Tyr recombinase domain is found at 116–298 (LLPKALSEDD…SIKHLEAVYT (183 aa)). Catalysis depends on residues Arg159, Lys182, His250, Arg253, and His276. Tyr285 acts as the O-(3'-phospho-DNA)-tyrosine intermediate in catalysis.

This sequence belongs to the 'phage' integrase family. XerC subfamily. As to quaternary structure, forms a cyclic heterotetrameric complex composed of two molecules of XerC and two molecules of XerD.

The protein localises to the cytoplasm. Site-specific tyrosine recombinase, which acts by catalyzing the cutting and rejoining of the recombining DNA molecules. The XerC-XerD complex is essential to convert dimers of the bacterial chromosome into monomers to permit their segregation at cell division. It also contributes to the segregational stability of plasmids. This Rickettsia felis (strain ATCC VR-1525 / URRWXCal2) (Rickettsia azadi) protein is Tyrosine recombinase XerC.